An 81-amino-acid chain; its full sequence is Cortexin-3 (81 aa).

A helical membrane pass occupies residues Met29 to Phe49.

Belongs to the cortexin family.

Its subcellular location is the membrane. In Homo sapiens (Human), this protein is Cortexin-3 (CTXN3).